A 138-amino-acid chain; its full sequence is Protein PsiE homolog (138 aa).

4 helical membrane-spanning segments follow: residues 14–34 (LQAL…GLLI), 56–76 (YEML…ALII), 84–104 (HFPL…LIII), and 109–129 (AIST…FFIV).

It belongs to the PsiE family.

The protein localises to the cell membrane. This chain is Protein PsiE homolog, found in Bacillus velezensis (strain DSM 23117 / BGSC 10A6 / LMG 26770 / FZB42) (Bacillus amyloliquefaciens subsp. plantarum).